Here is a 493-residue protein sequence, read N- to C-terminus: Cysteine--tRNA ligase (493 aa).

Cysteine 29 contacts Zn(2+). The 'HIGH' region signature appears at 31–41; it reads VTVYDYCHIGH. Residues cysteine 209, histidine 234, and glutamate 238 each coordinate Zn(2+). The 'KMSKS' region motif lies at 266-270; sequence KMSKS. Residue lysine 269 coordinates ATP.

This sequence belongs to the class-I aminoacyl-tRNA synthetase family. As to quaternary structure, monomer. It depends on Zn(2+) as a cofactor.

The protein localises to the cytoplasm. The enzyme catalyses tRNA(Cys) + L-cysteine + ATP = L-cysteinyl-tRNA(Cys) + AMP + diphosphate. In Pelobacter propionicus (strain DSM 2379 / NBRC 103807 / OttBd1), this protein is Cysteine--tRNA ligase.